We begin with the raw amino-acid sequence, 469 residues long: Neuraminidase (469 aa).

Residues 1-9 (MNPNQKIIT) are Intravirion-facing. A helical membrane pass occupies residues 10 to 30 (IGSVSLTIATVCFLMQIAILV). An involved in apical transport and lipid raft association region spans residues 11–33 (GSVSLTIATVCFLMQIAILVTTV). Topologically, residues 31-469 (TTVTLHFKQH…DGANINFMPI (439 aa)) are virion surface. The tract at residues 36–88 (HFKQHECDSPASNQVMPCEPIIIERNITEIVYLNNTTIEKEICPKVVEYRNWS) is hypervariable stalk region. Residues Asn-61, Asn-69, Asn-70, and Asn-86 are each glycosylated (N-linked (GlcNAc...) asparagine; by host). A head of neuraminidase region spans residues 91 to 469 (QCQITGFAPF…DGANINFMPI (379 aa)). Cystine bridges form between Cys-92-Cys-417, Cys-124-Cys-129, Cys-175-Cys-193, Cys-183-Cys-230, Cys-232-Cys-237, Cys-278-Cys-291, Cys-280-Cys-289, Cys-318-Cys-337, and Cys-421-Cys-447. Arg-118 lines the substrate pocket. A glycan (N-linked (GlcNAc...) asparagine; by host) is linked at Asn-146. Asp-151 functions as the Proton donor/acceptor in the catalytic mechanism. Arg-152 contributes to the substrate binding site. Asn-200 and Asn-234 each carry an N-linked (GlcNAc...) asparagine; by host glycan. Residue 276-277 (EE) participates in substrate binding. Arg-292 contacts substrate. Positions 293, 297, and 324 each coordinate Ca(2+). The disordered stretch occupies residues 324–349 (DTPRNDDRSSNSNCRNPNNERGTQGV). Low complexity predominate over residues 333-342 (SNSNCRNPNN). 3 residues coordinate Ca(2+): Gly-345, Thr-346, and Gln-347. Position 371 (Arg-371) interacts with substrate. The N-linked (GlcNAc...) asparagine; by host glycan is linked to Asn-402. The active-site Nucleophile is Tyr-406.

It belongs to the glycosyl hydrolase 34 family. In terms of assembly, homotetramer. It depends on Ca(2+) as a cofactor. In terms of processing, N-glycosylated.

It is found in the virion membrane. Its subcellular location is the host apical cell membrane. It catalyses the reaction Hydrolysis of alpha-(2-&gt;3)-, alpha-(2-&gt;6)-, alpha-(2-&gt;8)- glycosidic linkages of terminal sialic acid residues in oligosaccharides, glycoproteins, glycolipids, colominic acid and synthetic substrates.. With respect to regulation, inhibited by the neuraminidase inhibitors zanamivir (Relenza) and oseltamivir (Tamiflu). These drugs interfere with the release of progeny virus from infected cells and are effective against all influenza strains. Resistance to neuraminidase inhibitors is quite rare. Catalyzes the removal of terminal sialic acid residues from viral and cellular glycoconjugates. Cleaves off the terminal sialic acids on the glycosylated HA during virus budding to facilitate virus release. Additionally helps virus spread through the circulation by further removing sialic acids from the cell surface. These cleavages prevent self-aggregation and ensure the efficient spread of the progeny virus from cell to cell. Otherwise, infection would be limited to one round of replication. Described as a receptor-destroying enzyme because it cleaves a terminal sialic acid from the cellular receptors. May facilitate viral invasion of the upper airways by cleaving the sialic acid moieties on the mucin of the airway epithelial cells. Likely to plays a role in the budding process through its association with lipid rafts during intracellular transport. May additionally display a raft-association independent effect on budding. Plays a role in the determination of host range restriction on replication and virulence. Sialidase activity in late endosome/lysosome traffic seems to enhance virus replication. The chain is Neuraminidase from Aves (Human).